A 292-amino-acid chain; its full sequence is Shikimate dehydrogenase (NADP(+)) (292 aa).

Residues 22-24 and Ser-69 contribute to the shikimate site; that span reads SLS. The active-site Proton acceptor is the Lys-73. Shikimate contacts are provided by Asn-94 and Asp-111. NADP(+)-binding positions include 135–139 and Ile-236; that span reads GVGGA. Residue Tyr-238 coordinates shikimate. Gly-260 is an NADP(+) binding site.

The protein belongs to the shikimate dehydrogenase family. As to quaternary structure, homodimer.

It catalyses the reaction shikimate + NADP(+) = 3-dehydroshikimate + NADPH + H(+). It functions in the pathway metabolic intermediate biosynthesis; chorismate biosynthesis; chorismate from D-erythrose 4-phosphate and phosphoenolpyruvate: step 4/7. In terms of biological role, involved in the biosynthesis of the chorismate, which leads to the biosynthesis of aromatic amino acids. Catalyzes the reversible NADPH linked reduction of 3-dehydroshikimate (DHSA) to yield shikimate (SA). This Streptococcus pyogenes serotype M28 (strain MGAS6180) protein is Shikimate dehydrogenase (NADP(+)).